The sequence spans 229 residues: GTP cyclohydrolase 1 (229 aa).

Zn(2+)-binding residues include Cys116, His119, and Cys187.

This sequence belongs to the GTP cyclohydrolase I family. Toroid-shaped homodecamer, composed of two pentamers of five dimers.

It carries out the reaction GTP + H2O = 7,8-dihydroneopterin 3'-triphosphate + formate + H(+). It participates in cofactor biosynthesis; 7,8-dihydroneopterin triphosphate biosynthesis; 7,8-dihydroneopterin triphosphate from GTP: step 1/1. This Synechococcus sp. (strain JA-3-3Ab) (Cyanobacteria bacterium Yellowstone A-Prime) protein is GTP cyclohydrolase 1.